The following is a 317-amino-acid chain: MSGQGPQRRLLGSPNATSPTTPHFKLAANQTGPRCLEVSIPNGLFLSLGLVSVVENVLVVAAIAKNRNLHSPMYYFIGCLAVSDLLVSVTNVLETAVMLLVEAGALAAQAAVVQQLDDIIDVLICGSMVSSLCFLGAIAVDRYLSIFYALRYHSIVTLPRAWRAISAIWVASVLSSTLFIAYYNHTAVLLCLVSFFVAMLVLMAVLYVHMLARARQHARGIARLRKRQHSVHQGFGLKGAATLTILLGIFFLCWGPFFLHLSLMVLCPQHPICGCVFQNFNLFLTLIICNSIIDPFIYAFRSQELRKTLQEVVLCSW.

The tract at residues 1–23 (MSGQGPQRRLLGSPNATSPTTPH) is disordered. The Extracellular portion of the chain corresponds to 1-37 (MSGQGPQRRLLGSPNATSPTTPHFKLAANQTGPRCLE). A glycan (N-linked (GlcNAc...) asparagine) is linked at Asn-29. A helical transmembrane segment spans residues 38-63 (VSIPNGLFLSLGLVSVVENVLVVAAI). At 64 to 72 (AKNRNLHSP) the chain is on the cytoplasmic side. Residues 73-93 (MYYFIGCLAVSDLLVSVTNVL) traverse the membrane as a helical segment. Over 94-118 (ETAVMLLVEAGALAAQAAVVQQLDD) the chain is Extracellular. The helical transmembrane segment at 119-140 (IIDVLICGSMVSSLCFLGAIAV) threads the bilayer. At 141–163 (DRYLSIFYALRYHSIVTLPRAWR) the chain is on the cytoplasmic side. A helical transmembrane segment spans residues 164–183 (AISAIWVASVLSSTLFIAYY). At 184-191 (NHTAVLLC) the chain is on the extracellular side. A helical transmembrane segment spans residues 192-211 (LVSFFVAMLVLMAVLYVHML). Residues 212 to 240 (ARARQHARGIARLRKRQHSVHQGFGLKGA) lie on the Cytoplasmic side of the membrane. The helical transmembrane segment at 241–266 (ATLTILLGIFFLCWGPFFLHLSLMVL) threads the bilayer. The Extracellular portion of the chain corresponds to 267–279 (CPQHPICGCVFQN). A helical transmembrane segment spans residues 280-300 (FNLFLTLIICNSIIDPFIYAF). Topologically, residues 301–317 (RSQELRKTLQEVVLCSW) are cytoplasmic. Cys-315 carries the S-palmitoyl cysteine lipid modification.

This sequence belongs to the G-protein coupled receptor 1 family. As to quaternary structure, interacts with MGRN1, but does not undergo MGRN1-mediated ubiquitination; this interaction competes with GNAS-binding and thus inhibits agonist-induced cAMP production. Interacts with OPN3; the interaction results in a decrease in MC1R-mediated cAMP signaling and ultimately a decrease in melanin production in melanocytes.

The protein localises to the cell membrane. Functionally, receptor for MSH (alpha, beta and gamma) and ACTH. The activity of this receptor is mediated by G proteins which activate adenylate cyclase. Mediates melanogenesis, the production of eumelanin (black/brown) and phaeomelanin (red/yellow), via regulation of cAMP signaling in melanocytes. The protein is Melanocyte-stimulating hormone receptor (MC1R) of Vulpes vulpes (Red fox).